A 128-amino-acid chain; its full sequence is Fluoride-specific ion channel FluC (128 aa).

4 helical membrane-spanning segments follow: residues 8-28 (IIFI…LGLL), 38-58 (LGTL…LAFF), 71-91 (FFVT…AEVI), and 103-123 (LMLA…GVFI). 2 residues coordinate Na(+): glycine 78 and threonine 81.

This sequence belongs to the fluoride channel Fluc/FEX (TC 1.A.43) family.

It localises to the cell inner membrane. The catalysed reaction is fluoride(in) = fluoride(out). Na(+) is not transported, but it plays an essential structural role and its presence is essential for fluoride channel function. Its function is as follows. Fluoride-specific ion channel. Important for reducing fluoride concentration in the cell, thus reducing its toxicity. This Pasteurella multocida (strain Pm70) protein is Fluoride-specific ion channel FluC.